The sequence spans 97 residues: Putative mitochondrial import inner membrane translocase subunit Tim8 A-B (97 aa).

A Twin CX3C motif motif is present at residues 43–66 (CWEKCMDKPGPRLDGRAELCLVNC). Intrachain disulfides connect Cys43/Cys66 and Cys47/Cys62.

It belongs to the small Tim family. As to quaternary structure, heterohexamer; possibly composed of 3 copies of TIMM8AB and 3 copies of TIMM13.

The protein resides in the mitochondrion inner membrane. Putative mitochondrial intermembrane chaperone that participates in the import and insertion of some multi-pass transmembrane proteins into the mitochondrial inner membrane. Also required for the transfer of beta-barrel precursors from the TOM complex to the sorting and assembly machinery (SAM complex) of the outer membrane. Acts as a chaperone-like protein that protects the hydrophobic precursors from aggregation and guide them through the mitochondrial intermembrane space. The polypeptide is Putative mitochondrial import inner membrane translocase subunit Tim8 A-B (Timm8a2) (Mus musculus (Mouse)).